A 440-amino-acid polypeptide reads, in one-letter code: Trigger factor (440 aa).

The region spanning 176–261 is the PPIase FKBP-type domain; it reads GDKVVIDYQN…VKSIYVVKDV (86 aa).

This sequence belongs to the FKBP-type PPIase family. Tig subfamily.

It is found in the cytoplasm. The catalysed reaction is [protein]-peptidylproline (omega=180) = [protein]-peptidylproline (omega=0). Functionally, involved in protein export. Acts as a chaperone by maintaining the newly synthesized protein in an open conformation. Functions as a peptidyl-prolyl cis-trans isomerase. This is Trigger factor from Ehrlichia canis (strain Jake).